Here is an 84-residue protein sequence, read N- to C-terminus: Delta-conotoxin-like MVIB (84 aa).

The first 22 residues, 1 to 22 (MKLTCVMIVAVLFLTAWTFVTA), serve as a signal peptide directing secretion. The propeptide occupies 23 to 51 (DDSRYGLKDLFPKERHEMKNPEASKLNQR). Disulfide bonds link cysteine 54–cysteine 69, cysteine 61–cysteine 73, and cysteine 68–cysteine 77. 4-hydroxyproline is present on proline 65. Position 83 is a serine amide (serine 83).

It belongs to the conotoxin O1 superfamily. As to expression, expressed by the venom duct.

It is found in the secreted. In terms of biological role, delta-conotoxins bind to site 6 of voltage-gated sodium channels (Nav) and inhibit the inactivation process. This Conus magus (Magical cone) protein is Delta-conotoxin-like MVIB.